Here is a 338-residue protein sequence, read N- to C-terminus: Anthranilate phosphoribosyltransferase (338 aa).

Residues G78, 81 to 82, S86, 88 to 91, 106 to 114, and S118 each bind 5-phospho-alpha-D-ribose 1-diphosphate; these read GD, NIST, and KHGNKSITS. Residue G78 participates in anthranilate binding. S90 contributes to the Mg(2+) binding site. N109 contributes to the anthranilate binding site. R163 lines the anthranilate pocket. 2 residues coordinate Mg(2+): D222 and E223.

The protein belongs to the anthranilate phosphoribosyltransferase family. As to quaternary structure, homodimer. The cofactor is Mg(2+).

It carries out the reaction N-(5-phospho-beta-D-ribosyl)anthranilate + diphosphate = 5-phospho-alpha-D-ribose 1-diphosphate + anthranilate. The protein operates within amino-acid biosynthesis; L-tryptophan biosynthesis; L-tryptophan from chorismate: step 2/5. Functionally, catalyzes the transfer of the phosphoribosyl group of 5-phosphorylribose-1-pyrophosphate (PRPP) to anthranilate to yield N-(5'-phosphoribosyl)-anthranilate (PRA). In Staphylococcus carnosus (strain TM300), this protein is Anthranilate phosphoribosyltransferase.